We begin with the raw amino-acid sequence, 1149 residues long: MDALRKLSSLGRNQDKILDTASSSSYTEASVAEIPKASVETGGKDEASPSGLAPIKVRVSNDVGAEIEEKRGGDEESVGSGESFDSALERLAASSVTSFEPPSPVGSVGEQSQFAGGVSEDLEERGQEEYLYYDDYGDDGEVEKDGSEKDSTSSSSSSSSSECSSSASNTEDEMDISEYGASSERAMPLANPSGVTDEEEEDGKELKYNVERAVTAEENMPNGLKLGSEARGIASSSRGAELGNAFKDSREDHEVQEELTERSVKVAVENYDQEGEDADSTEIKKEFPRELTQSRTVIESPAYRFTSEPVDPALLELKSEKAQPNTQSFARIAEGESDADADADADDEDVESGDEHEDGYTEINIRQAAGKSESENESGNNPSLGPAGPSLISVLVRKTARRPASTAATDTQSSNAASSTQVAGTTDVNPSIEVNEVNETREKLQNIRVKFLRLVHRLGQSPQNVVVAQVLYRLGLAESLRGGSTRNHTRAFDFDRANAIAEEQEADNQEEELDFACTILVLGKTGVGKSATINSIFDEHKSVTNAYNPSTTNVYEVVGTMLGVKVRFVDTPGLLFSVADQRHNERIMGRVKKYIKKASPDIVLYFDRMDMQTREFGDVPLLRTITNVFGTAVWFNTIVVLTHASTAPPDGPNGTPMGYELFVAQRSHSVQQSIRQVAGDMRLQNPVSLVENHPACRANRNGQRVLPNGQIWKPHLMLLCFASKILAEANTLLKLQDTAAPGRPFGQRSRVPPLPFLLSSLLQSRAQLKLPDEQLDESDESDDDEEDEEEGDEYDDLPPFRSLSKEELEELSKDQRQEYAEELAVRERLFQKKQHREQLQRRKEMKKRATAMRKEGLSHPADEADDEAGQPAAVPVPMPDMALPPSFDSDNPTHRYRYLETANQWLVRPVLETHGWDHDAGYDGFNVEKMFVVKNKIPASISGQVTKDKKESQVNFEAAASLKHGEGKVTLTGFDVQTIGKDLAYTLRAETRFNNFKRNKTTAGVTATYLNDTIAAGVKLEDRILIGKRVKMVVNGGVLTGKGDKAFGGSLEATLRGKEYPLSRTLSTLGLSVMDWHGDLAIGGNLQSQFMVGKTMMVGRANLNNRGSGQVSIRASSSEQLQMVLIGIVPILRSLINCRFGFGGGQSSQ.

Disordered stretches follow at residues 1–206 (MDAL…GKEL), 219–292 (NMPN…RELT), and 315–431 (LELK…VNPS). The span at 131–142 (LYYDDYGDDGEV) shows a compositional bias: acidic residues. Low complexity predominate over residues 152-168 (TSSSSSSSSSECSSSAS). Acidic residues-rich tracts occupy residues 271-280 (YDQEGEDADS) and 335-357 (GESDADADADADDEDVESGDEHE). Residues 406 to 429 (TAATDTQSSNAASSTQVAGTTDVN) show a composition bias toward polar residues. The region spanning 514–743 (DFACTILVLG…KLQDTAAPGR (230 aa)) is the AIG1-type G domain. The G1 stretch occupies residues 523 to 530 (GKTGVGKS). 526-531 (GVGKSA) serves as a coordination point for GTP. Residue Ser-530 participates in Mg(2+) binding. A G2 region spans residues 550 to 554 (STTNV). A G3 region spans residues 570 to 573 (DTPG). The tract at residues 642–645 (THAS) is G4. GTP contacts are provided by residues His-643 and 691 to 692 (EN). The tract at residues 691 to 693 (ENH) is G5. Disordered stretches follow at residues 769–800 (KLPDEQLDESDESDDDEEDEEEGDEYDDLPPF) and 833–869 (KQHREQLQRRKEMKKRATAMRKEGLSHPADEADDEAG). Residues 773-796 (EQLDESDESDDDEEDEEEGDEYDD) show a composition bias toward acidic residues. 2 stretches are compositionally biased toward basic and acidic residues: residues 833–842 (KQHREQLQRR) and 852–862 (MRKEGLSHPAD). A helical membrane pass occupies residues 1123-1144 (MVLIGIVPILRSLINCRFGFGG).

This sequence belongs to the TRAFAC class TrmE-Era-EngA-EngB-Septin-like GTPase superfamily. AIG1/Toc34/Toc159-like paraseptin GTPase family. TOC159 subfamily. Part of the TOC core complex. Mg(2+) is required as a cofactor.

It is found in the plastid. It localises to the chloroplast outer membrane. Its function is as follows. GTPase involved in protein precursor import into chloroplasts. Seems to recognize chloroplast-destined precursor proteins and regulate their presentation to the translocation channel through GTP hydrolysis. Probably specialized in the import of nuclear encoded non-photosynthetic preproteins from the cytoplasm to the chloroplast. The chain is Translocase of chloroplast 126, chloroplastic from Physcomitrium patens (Spreading-leaved earth moss).